A 469-amino-acid chain; its full sequence is 6-phosphofructo-2-kinase/fructose-2,6-bisphosphatase 4 (469 aa).

The 6-phosphofructo-2-kinase stretch occupies residues 1-249 (MASPRELTQN…YYLMNIHVTP (249 aa)). Ser29 carries the phosphoserine; by PKC modification. Position 46-54 (46-54 (GLPARGKTY)) interacts with ATP. Residues Arg79 and Arg103 each coordinate beta-D-fructose 6-phosphate. Asp129 is a catalytic residue. 2 residues coordinate beta-D-fructose 6-phosphate: Thr131 and Arg137. Cys159 is an active-site residue. 168-173 (NIVQVK) contacts ATP. Beta-D-fructose 6-phosphate-binding residues include Lys173, Arg194, and Tyr198. Residues 250 to 469 (RSIYLCRHGE…EALVTVPAHQ (220 aa)) are fructose-2,6-bisphosphatase. Arg256 is a binding site for beta-D-fructose 2,6-bisphosphate. Catalysis depends on His257, which acts as the Tele-phosphohistidine intermediate. Asn263, Gly269, and Arg306 together coordinate beta-D-fructose 2,6-bisphosphate. Glu326 functions as the Proton donor/acceptor in the catalytic mechanism. Beta-D-fructose 2,6-bisphosphate is bound by residues Tyr337, Arg351, Lys355, Tyr366, Gln392, and Arg396. Residue 348 to 351 (FALR) coordinates ATP. ATP contacts are provided by residues 392 to 396 (QAVMR) and Tyr428. Thr444 bears the Phosphothreonine; by PKC mark.

It in the C-terminal section; belongs to the phosphoglycerate mutase family. As to quaternary structure, homodimer. As to expression, testis.

The enzyme catalyses beta-D-fructose 2,6-bisphosphate + H2O = beta-D-fructose 6-phosphate + phosphate. The catalysed reaction is beta-D-fructose 6-phosphate + ATP = beta-D-fructose 2,6-bisphosphate + ADP + H(+). The most important regulatory mechanism of these opposing activities is by phosphorylation and dephosphorylation of the enzyme. Functionally, synthesis and degradation of fructose 2,6-bisphosphate. This is 6-phosphofructo-2-kinase/fructose-2,6-bisphosphatase 4 (Pfkfb4) from Rattus norvegicus (Rat).